A 502-amino-acid chain; its full sequence is Glucose-6-phosphate isomerase (502 aa).

Residue glutamate 331 is the Proton donor of the active site. Catalysis depends on residues histidine 362 and lysine 471.

It belongs to the GPI family.

It localises to the cytoplasm. The enzyme catalyses alpha-D-glucose 6-phosphate = beta-D-fructose 6-phosphate. The protein operates within carbohydrate biosynthesis; gluconeogenesis. It participates in carbohydrate degradation; glycolysis; D-glyceraldehyde 3-phosphate and glycerone phosphate from D-glucose: step 2/4. In terms of biological role, catalyzes the reversible isomerization of glucose-6-phosphate to fructose-6-phosphate. In Xylella fastidiosa (strain 9a5c), this protein is Glucose-6-phosphate isomerase.